A 360-amino-acid chain; its full sequence is Photosystem II protein D1 (360 aa).

3 helical membrane passes run tyrosine 29–serine 46, histidine 118–leucine 133, and tryptophan 142–alanine 156. Histidine 118 contacts chlorophyll a. Residue tyrosine 126 participates in pheophytin a binding. [CaMn4O5] cluster-binding residues include aspartate 170 and glutamate 189. The helical transmembrane segment at phenylalanine 197 to leucine 218 threads the bilayer. Histidine 198 serves as a coordination point for chlorophyll a. Residues histidine 215 and serine 264–phenylalanine 265 contribute to the a quinone site. Histidine 215 lines the Fe cation pocket. Histidine 272 provides a ligand contact to Fe cation. The chain crosses the membrane as a helical span at residues phenylalanine 274–leucine 288. [CaMn4O5] cluster-binding residues include histidine 332, glutamate 333, aspartate 342, and alanine 344. The propeptide occupies serine 345 to glycine 360.

Belongs to the reaction center PufL/M/PsbA/D family. In terms of assembly, PSII is composed of 1 copy each of membrane proteins PsbA, PsbB, PsbC, PsbD, PsbE, PsbF, PsbH, PsbI, PsbJ, PsbK, PsbL, PsbM, PsbT, PsbX, PsbY, PsbZ, Psb30/Ycf12, at least 3 peripheral proteins of the oxygen-evolving complex and a large number of cofactors. It forms dimeric complexes. The D1/D2 heterodimer binds P680, chlorophylls that are the primary electron donor of PSII, and subsequent electron acceptors. It shares a non-heme iron and each subunit binds pheophytin, quinone, additional chlorophylls, carotenoids and lipids. D1 provides most of the ligands for the Mn4-Ca-O5 cluster of the oxygen-evolving complex (OEC). There is also a Cl(-1) ion associated with D1 and D2, which is required for oxygen evolution. The PSII complex binds additional chlorophylls, carotenoids and specific lipids. is required as a cofactor. In terms of processing, tyr-161 forms a radical intermediate that is referred to as redox-active TyrZ, YZ or Y-Z. C-terminally processed by CTPA; processing is essential to allow assembly of the oxygen-evolving complex and thus photosynthetic growth.

It is found in the plastid. The protein resides in the chloroplast thylakoid membrane. It catalyses the reaction 2 a plastoquinone + 4 hnu + 2 H2O = 2 a plastoquinol + O2. Functionally, photosystem II (PSII) is a light-driven water:plastoquinone oxidoreductase that uses light energy to abstract electrons from H(2)O, generating O(2) and a proton gradient subsequently used for ATP formation. It consists of a core antenna complex that captures photons, and an electron transfer chain that converts photonic excitation into a charge separation. The D1/D2 (PsbA/PsbD) reaction center heterodimer binds P680, the primary electron donor of PSII as well as several subsequent electron acceptors. This Pyropia yezoensis (Susabi-nori) protein is Photosystem II protein D1.